We begin with the raw amino-acid sequence, 260 residues long: Putative hydro-lyase Bmul_5125/BMULJ_03391 (260 aa).

The protein belongs to the D-glutamate cyclase family.

The chain is Putative hydro-lyase Bmul_5125/BMULJ_03391 from Burkholderia multivorans (strain ATCC 17616 / 249).